A 398-amino-acid polypeptide reads, in one-letter code: Acetate kinase (398 aa).

Asn-8 lines the Mg(2+) pocket. ATP is bound at residue Lys-15. Substrate is bound at residue Arg-89. Asp-146 acts as the Proton donor/acceptor in catalysis. Residues 206 to 210 (HIGNG), 283 to 285 (DMR), and 331 to 335 (GMGEN) contribute to the ATP site. Residue Glu-383 participates in Mg(2+) binding.

It belongs to the acetokinase family. In terms of assembly, homodimer. Mg(2+) serves as cofactor. It depends on Mn(2+) as a cofactor.

The protein localises to the cytoplasm. The enzyme catalyses acetate + ATP = acetyl phosphate + ADP. It participates in metabolic intermediate biosynthesis; acetyl-CoA biosynthesis; acetyl-CoA from acetate: step 1/2. Catalyzes the formation of acetyl phosphate from acetate and ATP. Can also catalyze the reverse reaction. The sequence is that of Acetate kinase from Streptococcus pyogenes serotype M5 (strain Manfredo).